Here is a 184-residue protein sequence, read N- to C-terminus: Peptide deformylase (184 aa).

Residues Cys111 and His154 each coordinate Fe cation. Glu155 is an active-site residue. His158 is a Fe cation binding site.

It belongs to the polypeptide deformylase family. It depends on Fe(2+) as a cofactor.

It catalyses the reaction N-terminal N-formyl-L-methionyl-[peptide] + H2O = N-terminal L-methionyl-[peptide] + formate. Removes the formyl group from the N-terminal Met of newly synthesized proteins. Requires at least a dipeptide for an efficient rate of reaction. N-terminal L-methionine is a prerequisite for activity but the enzyme has broad specificity at other positions. The polypeptide is Peptide deformylase (Lacticaseibacillus casei (strain BL23) (Lactobacillus casei)).